A 283-amino-acid polypeptide reads, in one-letter code: Thymidylate synthase (283 aa).

Residue R21 participates in dUMP binding. H51 is a (6R)-5,10-methylene-5,6,7,8-tetrahydrofolate binding site. DUMP is bound at residue 123–124 (RR). C156 serves as the catalytic Nucleophile. Residues 185-188 (RSAD), N196, and 226-228 (HIY) contribute to the dUMP site. D188 is a (6R)-5,10-methylene-5,6,7,8-tetrahydrofolate binding site. Position 282 (A282) interacts with (6R)-5,10-methylene-5,6,7,8-tetrahydrofolate.

Belongs to the thymidylate synthase family. Bacterial-type ThyA subfamily. As to quaternary structure, homodimer.

The protein localises to the cytoplasm. It carries out the reaction dUMP + (6R)-5,10-methylene-5,6,7,8-tetrahydrofolate = 7,8-dihydrofolate + dTMP. It functions in the pathway pyrimidine metabolism; dTTP biosynthesis. In terms of biological role, catalyzes the reductive methylation of 2'-deoxyuridine-5'-monophosphate (dUMP) to 2'-deoxythymidine-5'-monophosphate (dTMP) while utilizing 5,10-methylenetetrahydrofolate (mTHF) as the methyl donor and reductant in the reaction, yielding dihydrofolate (DHF) as a by-product. This enzymatic reaction provides an intracellular de novo source of dTMP, an essential precursor for DNA biosynthesis. The protein is Thymidylate synthase of Flavobacterium johnsoniae (strain ATCC 17061 / DSM 2064 / JCM 8514 / BCRC 14874 / CCUG 350202 / NBRC 14942 / NCIMB 11054 / UW101) (Cytophaga johnsonae).